We begin with the raw amino-acid sequence, 35 residues long: MSDIN-like toxin proprotein 6 (35 aa).

The propeptide occupies 1 to 10 (MSDINGTRLP). The segment at residues 11 to 20 (IPGLIPLGIP) is a cross-link (cyclopeptide (Ile-Pro)). A propeptide spanning residues 21–35 (CVSDDVNPTLTRGER) is cleaved from the precursor.

This sequence belongs to the MSDIN fungal toxin family. Processed by the macrocyclase-peptidase enzyme POPB to yield a toxic cyclic decapeptide. POPB first removes 10 residues from the N-terminus. Conformational trapping of the remaining peptide forces the enzyme to release this intermediate rather than proceed to macrocyclization. The enzyme rebinds the remaining peptide in a different conformation and catalyzes macrocyclization of the N-terminal 10 residues.

Probable toxin that belongs to the MSDIN-like toxin family responsible for a large number of food poisoning cases and deaths. The protein is MSDIN-like toxin proprotein 6 of Amanita bisporigera (Destroying angel).